A 165-amino-acid chain; its full sequence is Cyclic pyranopterin monophosphate synthase (165 aa).

Substrate is bound by residues Phe83–His85 and Met120–Glu121. Residue Asp135 is part of the active site.

The protein belongs to the MoaC family. Homohexamer; trimer of dimers.

It carries out the reaction (8S)-3',8-cyclo-7,8-dihydroguanosine 5'-triphosphate = cyclic pyranopterin phosphate + diphosphate. Its pathway is cofactor biosynthesis; molybdopterin biosynthesis. Functionally, catalyzes the conversion of (8S)-3',8-cyclo-7,8-dihydroguanosine 5'-triphosphate to cyclic pyranopterin monophosphate (cPMP). The chain is Cyclic pyranopterin monophosphate synthase from Xanthomonas campestris pv. campestris (strain B100).